A 428-amino-acid polypeptide reads, in one-letter code: MGSVRTNRYSIVSSEEDGMKLATMAVANGFGNGKSKVHTRQQCRSRFVKKDGHCNVQFINVGEKGQRYLADIFTTCVDIRWRWMLVIFCLAFVLSWLFFGCVFWLIALLHGDLDTSKVSKACVSEVNSFTAAFLFSIETQTTIGYGFRCVTDECPIAVFMVVFQSIVGCIIDAFIIGAVMAKMAKPKKRNETLVFSHNAVIAMRDGKLCLMWRVGNLRKSHLVEAHVRAQLLKSRITSEGEYIPLDQIDINVGFDSGIDRIFLVSPITIVHEIDEDSPLYDLSKQDIDNADFEIVVILEGMVEATAMTTQCRSSYLANEILWGHRYEPVLFEEKHYYKVDYSRFHKTYEVPNTPLCSARDLAEKKYILSNANSFCYENEVALTSKEEEEDSENGVPESTSTDSPPGIDLHNQASVPLEPRPLRRESEI.

Topologically, residues 1 to 81 are cytoplasmic; that stretch reads MGSVRTNRYS…IFTTCVDIRW (81 aa). Cys-76 is subject to S-nitrosocysteine. Residues 82 to 106 form a helical membrane-spanning segment; the sequence is RWMLVIFCLAFVLSWLFFGCVFWLI. Over 107–128 the chain is Extracellular; sequence ALLHGDLDTSKVSKACVSEVNS. Residues 129–140 constitute an intramembrane region (helical; Pore-forming); the sequence is FTAAFLFSIETQ. An intramembrane region (pore-forming) is located at residues 141 to 147; the sequence is TTIGYGF. Residues 142–147 carry the Selectivity filter motif; that stretch reads TIGYGF. The Extracellular portion of the chain corresponds to 148–156; that stretch reads RCVTDECPI. A helical membrane pass occupies residues 157 to 178; the sequence is AVFMVVFQSIVGCIIDAFIIGA. Residues 179–428 lie on the Cytoplasmic side of the membrane; it reads VMAKMAKPKK…PRPLRRESEI (250 aa). The polyphosphoinositide (PIP2)-binding stretch occupies residues 181 to 208; the sequence is AKMAKPKKRNETLVFSHNAVIAMRDGKL. A disordered region spans residues 383-428; that stretch reads TSKEEEEDSENGVPESTSTDSPPGIDLHNQASVPLEPRPLRRESEI. The PDZ-binding motif lies at 426 to 428; the sequence is SEI.

It belongs to the inward rectifier-type potassium channel (TC 1.A.2.1) family. KCNJ2 subfamily. As to quaternary structure, homotetramer. Homomultimeric and heteromultimeric association with KCNJ4/Kir2.3. Can form heteromeric channels with Kir2.6/KCNJ18. Associates, via its PDZ-recognition domain, with a complex containing LIN7A, LIN7B, LIN7C, DLG1, CASK and APBA1. Post-translationally, S-nitrosylation increases the open probability and inward rectifying currents. In terms of tissue distribution, prominently expressed in the central nervous system. Also found in other excitable tissues such as heart and skeletal muscle.

The protein resides in the cell membrane. It localises to the sarcolemma. It is found in the T-tubule. The catalysed reaction is K(+)(in) = K(+)(out). With respect to regulation, activated by phosphatidylinositol 4,5 biphosphate (PtdIns(4,5)P2). In terms of biological role, inward rectifier potassium channels are characterized by a greater tendency to allow potassium to flow into the cell rather than out of it. Their voltage dependence is regulated by the concentration of extracellular potassium; as external potassium is raised, the voltage range of the channel opening shifts to more positive voltages. The inward rectification is mainly due to the blockage of outward current by internal magnesium. Can be blocked by extracellular barium and cesium. Probably participates in establishing action potential waveform and excitability of neuronal and muscle tissues. This chain is Inward rectifier potassium channel 2 (Kcnj2), found in Mus musculus (Mouse).